Reading from the N-terminus, the 404-residue chain is tRNA/tmRNA (uracil-C(5))-methyltransferase (404 aa).

Residues Gln218, Tyr251, Asn256, Glu272, and Asp332 each contribute to the S-adenosyl-L-methionine site. Catalysis depends on Cys358, which acts as the Nucleophile. Catalysis depends on Glu392, which acts as the Proton acceptor.

It belongs to the class I-like SAM-binding methyltransferase superfamily. RNA M5U methyltransferase family. TrmA subfamily.

It carries out the reaction uridine(54) in tRNA + S-adenosyl-L-methionine = 5-methyluridine(54) in tRNA + S-adenosyl-L-homocysteine + H(+). It catalyses the reaction uridine(341) in tmRNA + S-adenosyl-L-methionine = 5-methyluridine(341) in tmRNA + S-adenosyl-L-homocysteine + H(+). Dual-specificity methyltransferase that catalyzes the formation of 5-methyluridine at position 54 (m5U54) in all tRNAs, and that of position 341 (m5U341) in tmRNA (transfer-mRNA). The chain is tRNA/tmRNA (uracil-C(5))-methyltransferase from Helicobacter hepaticus (strain ATCC 51449 / 3B1).